The sequence spans 467 residues: UDP-N-acetylmuramoylalanine--D-glutamate ligase (467 aa).

121-127 (GTNGKST) provides a ligand contact to ATP.

Belongs to the MurCDEF family.

It is found in the cytoplasm. It catalyses the reaction UDP-N-acetyl-alpha-D-muramoyl-L-alanine + D-glutamate + ATP = UDP-N-acetyl-alpha-D-muramoyl-L-alanyl-D-glutamate + ADP + phosphate + H(+). It participates in cell wall biogenesis; peptidoglycan biosynthesis. Cell wall formation. Catalyzes the addition of glutamate to the nucleotide precursor UDP-N-acetylmuramoyl-L-alanine (UMA). The sequence is that of UDP-N-acetylmuramoylalanine--D-glutamate ligase from Chelativorans sp. (strain BNC1).